The primary structure comprises 87 residues: Small ribosomal subunit protein uS15 (87 aa).

The protein belongs to the universal ribosomal protein uS15 family. As to quaternary structure, part of the 30S ribosomal subunit. Forms a bridge to the 50S subunit in the 70S ribosome, contacting the 23S rRNA.

Its function is as follows. One of the primary rRNA binding proteins, it binds directly to 16S rRNA where it helps nucleate assembly of the platform of the 30S subunit by binding and bridging several RNA helices of the 16S rRNA. Functionally, forms an intersubunit bridge (bridge B4) with the 23S rRNA of the 50S subunit in the ribosome. The protein is Small ribosomal subunit protein uS15 of Cutibacterium acnes (strain DSM 16379 / KPA171202) (Propionibacterium acnes).